A 364-amino-acid polypeptide reads, in one-letter code: Transcription factor IIIA (364 aa).

9 C2H2-type zinc fingers span residues 38-62, 68-92, 98-123, 130-154, 160-184, 187-211, 215-237, 244-269, and 275-299; these read FICSFPDCSASYNKAWKLDAHLCKH, FVCDYEGCGKAFIRDYHLSRHVLIH, FVCADDGCNQKFNTKSNLKKHIERKH, YVCSYEGCKKAFKKHQQLRTHQCQH, FRCTHEGCGKHFASPSRLKRHGKVH, YLCQKGCSFMGKTWTELLKHMREAH, ITCNVCQRMFKRRDYLKQHMKTH, YRCPRQGCGRTYTTVFNLQSHILSFH, and FVCEHAGCGKTFAMKQSLMRHSVVH. The tract at residues 299 to 364 is disordered; that stretch reads HDPDKKRMKL…PPPAALLTVC (66 aa). Residues 338-352 are compositionally biased toward low complexity; it reads SLPNASAESSSSPEA.

It localises to the nucleus. Involved in ribosomal large subunit biogenesis. Binds the approximately 50 base pairs internal control region (ICR) of 5S ribosomal RNA genes. It is required for their RNA polymerase III-dependent transcription and may also maintain the transcription of other genes. Also binds the transcribed 5S RNA's. This Mus musculus (Mouse) protein is Transcription factor IIIA (Gtf3a).